We begin with the raw amino-acid sequence, 316 residues long: Ribosomal protein L11 methyltransferase (316 aa).

T159, G179, D201, and N243 together coordinate S-adenosyl-L-methionine.

It belongs to the methyltransferase superfamily. PrmA family.

It is found in the cytoplasm. It carries out the reaction L-lysyl-[protein] + 3 S-adenosyl-L-methionine = N(6),N(6),N(6)-trimethyl-L-lysyl-[protein] + 3 S-adenosyl-L-homocysteine + 3 H(+). Functionally, methylates ribosomal protein L11. The chain is Ribosomal protein L11 methyltransferase from Gloeobacter violaceus (strain ATCC 29082 / PCC 7421).